Reading from the N-terminus, the 869-residue chain is Speckle targeted PIP5K1A-regulated poly(A) polymerase (869 aa).

The Matrin-type zinc-finger motif lies at Phe-16–Leu-46. An RRM domain is found at Arg-56 to Gln-128. Residues His-114 to Ser-144 are disordered. Ser-205 serves as a coordination point for ATP. Residues Asp-216 and Asp-218 each coordinate Mg(2+). UTP contacts are provided by Asp-216 and Asp-218. 2 disordered regions span residues Met-226 to Ala-247 and Cys-259 to Asp-335. Polar residues-rich tracts occupy residues Asp-266–Ser-276 and Thr-283–Asp-299. Residues Gln-314–Asp-335 show a composition bias toward basic and acidic residues. Position 395 (Asn-395) interacts with ATP. 4 residues coordinate UTP: Asn-395, Arg-417, Tyr-435, and His-552. A PAP-associated domain is found at Leu-494 to His-552. Residues Ser-601–Lys-869 are KA1; binds the bulging loops of U6 snRNA but is dispensable for terminal uridylyltransferase activity. 4 disordered regions span residues Gln-640–Glu-689, Met-735–Ser-757, Ala-775–Glu-796, and Arg-803–Pro-822. The span at Lys-671–Glu-689 shows a compositional bias: basic and acidic residues. Residues Ser-688 and Ser-744 each carry the phosphoserine modification.

It belongs to the DNA polymerase type-B-like family. Associates with the cleavage and polyadenylation specificity factor (CPSF) complex. Interacts with CPSF1 and CPSF3; the interaction is direct. Interacts with PIP5K1A. It depends on Mg(2+) as a cofactor. Mn(2+) is required as a cofactor. In terms of processing, phosphorylated by CK1 in the proline-rich (Pro-rich) region.

Its subcellular location is the nucleus. It is found in the nucleolus. It localises to the nucleus speckle. It catalyses the reaction RNA(n) + UTP = RNA(n)-3'-uridine ribonucleotide + diphosphate. It carries out the reaction RNA(n) + ATP = RNA(n)-3'-adenine ribonucleotide + diphosphate. With respect to regulation, adenylyltransferase activity is specifically phosphatidylinositol 4,5-bisphosphate (PtdIns(4,5)P2). Its function is as follows. Poly(A) polymerase that creates the 3'-poly(A) tail of specific pre-mRNAs. Localizes to nuclear speckles together with PIP5K1A and mediates polyadenylation of a select set of mRNAs, such as HMOX1. In addition to polyadenylation, it is also required for the 3'-end cleavage of pre-mRNAs: binds to the 3'UTR of targeted pre-mRNAs and promotes the recruitment and assembly of the CPSF complex on the 3'UTR of pre-mRNAs. In addition to adenylyltransferase activity, also has uridylyltransferase activity. However, the ATP ratio is higher than UTP in cells, suggesting that it functions primarily as a poly(A) polymerase. Acts as a specific terminal uridylyltransferase for U6 snRNA in vitro: responsible for a controlled elongation reaction that results in the restoration of the four 3'-terminal UMP-residues found in newly transcribed U6 snRNA. Not involved in replication-dependent histone mRNA degradation. The protein is Speckle targeted PIP5K1A-regulated poly(A) polymerase (Tut1) of Mus musculus (Mouse).